A 906-amino-acid chain; its full sequence is Cadherin-2 (906 aa).

Positions Met-1 to Ala-25 are cleaved as a signal peptide. Residues Ser-26–Arg-159 constitute a propeptide that is removed on maturation. Phosphoserine is present on residues Ser-96 and Ser-135. Cadherin domains lie at Asp-160–Phe-267, Leu-268–Phe-382, Thr-383–Phe-497, Ala-498–Pro-603, and Gln-604–Arg-714. Topologically, residues Asp-160 to Ala-724 are extracellular. Glu-170 provides a ligand contact to Ca(2+). Asn-190 carries an N-linked (GlcNAc...) asparagine glycan. Ca(2+) contacts are provided by Asp-226, Glu-228, Asp-259, Met-260, Asn-261, Asp-262, and Asn-263. An N-linked (GlcNAc...) asparagine glycan is attached at Asn-273. The Ca(2+) site is built by Asp-293, Asp-295, and Asn-301. An N-linked (GlcNAc...) asparagine glycan is attached at Asn-325. Asp-353 serves as a coordination point for Ca(2+). N-linked (GlcNAc...) asparagine glycosylation is found at Asn-402, Asn-572, Asn-622, Asn-651, and Asn-692. The helical transmembrane segment at Ile-725–Trp-745 threads the bilayer. The Cytoplasmic portion of the chain corresponds to Met-746–Asp-906. A compositionally biased stretch (low complexity) spans Ser-863–Gly-880. Positions Ser-863–Tyr-884 are disordered.

Homodimer (via extracellular region). Can also form heterodimers with other cadherins (via extracellular region). Dimerization occurs in trans, i.e. with a cadherin chain from another cell. Interacts with CDCP1. Interacts with PCDH8; this complex may also include TAOK2. The interaction with PCDH8 may lead to internalization through TAOK2/p38 MAPK pathway. Identified in a complex containing FGFR4, NCAM1, CDH2, PLCG1, FRS2, SRC, SHC1, GAP43 and CTTN. May interact with OBSCN (via protein kinase domain 2). Interacts with FBXO45. Cleaved by MMP24. Ectodomain cleavage leads to the generation of a soluble 90 kDa N-terminal soluble fragment and a 45 kDa membrane-bound C-terminal fragment 1 (CTF1), which is further cleaved by gamma-secretase into a 35 kDa. Cleavage in neural stem cells by MMP24 affects CDH2-mediated anchorage of neural stem cells to ependymocytes in the adult subependymal zone, leading to modulate neural stem cell quiescence.

It localises to the cell membrane. It is found in the sarcolemma. The protein localises to the cell junction. The protein resides in the cell surface. Its subcellular location is the desmosome. It localises to the adherens junction. Functionally, calcium-dependent cell adhesion protein; preferentially mediates homotypic cell-cell adhesion by dimerization with a CDH2 chain from another cell. Cadherins may thus contribute to the sorting of heterogeneous cell types. Acts as a regulator of neural stem cells quiescence by mediating anchorage of neural stem cells to ependymocytes in the adult subependymal zone: upon cleavage by MMP24, CDH2-mediated anchorage is affected, leading to modulate neural stem cell quiescence. Plays a role in cell-to-cell junction formation between pancreatic beta cells and neural crest stem (NCS) cells, promoting the formation of processes by NCS cells. Required for proper neurite branching. Required for pre- and postsynaptic organization. CDH2 may be involved in neuronal recognition mechanism. In hippocampal neurons, may regulate dendritic spine density. This Callithrix jacchus (White-tufted-ear marmoset) protein is Cadherin-2 (CDH2).